Consider the following 616-residue polypeptide: Dihydroxy-acid dehydratase (616 aa).

D81 serves as a coordination point for Mg(2+). C122 is a binding site for [2Fe-2S] cluster. The Mg(2+) site is built by D123 and K124. The residue at position 124 (K124) is an N6-carboxylysine. C195 contacts [2Fe-2S] cluster. E491 is a binding site for Mg(2+). Catalysis depends on S517, which acts as the Proton acceptor.

This sequence belongs to the IlvD/Edd family. Homodimer. [2Fe-2S] cluster is required as a cofactor. Requires Mg(2+) as cofactor.

It catalyses the reaction (2R)-2,3-dihydroxy-3-methylbutanoate = 3-methyl-2-oxobutanoate + H2O. The enzyme catalyses (2R,3R)-2,3-dihydroxy-3-methylpentanoate = (S)-3-methyl-2-oxopentanoate + H2O. It functions in the pathway amino-acid biosynthesis; L-isoleucine biosynthesis; L-isoleucine from 2-oxobutanoate: step 3/4. The protein operates within amino-acid biosynthesis; L-valine biosynthesis; L-valine from pyruvate: step 3/4. In terms of biological role, functions in the biosynthesis of branched-chain amino acids. Catalyzes the dehydration of (2R,3R)-2,3-dihydroxy-3-methylpentanoate (2,3-dihydroxy-3-methylvalerate) into 2-oxo-3-methylpentanoate (2-oxo-3-methylvalerate) and of (2R)-2,3-dihydroxy-3-methylbutanoate (2,3-dihydroxyisovalerate) into 2-oxo-3-methylbutanoate (2-oxoisovalerate), the penultimate precursor to L-isoleucine and L-valine, respectively. The sequence is that of Dihydroxy-acid dehydratase from Klebsiella pneumoniae subsp. pneumoniae (strain ATCC 700721 / MGH 78578).